We begin with the raw amino-acid sequence, 456 residues long: Chromosomal replication initiator protein DnaA 1 (456 aa).

The segment at 1-68 is domain I, interacts with DnaA modulators; it reads MRAWEEFLLL…KASLINNNGK (68 aa). Residues 68-101 are domain II; it reads KPIRVRVTSLDKSTPFKETQIQQEKTAYFTMKYG. The interval 102 to 320 is domain III, AAA+ region; that stretch reads DIDPNMSFAN…HALTTLAKRV (219 aa). ATP-binding residues include serine 150, glycine 152, lysine 153, and threonine 154. Positions 321–456 are domain IV, binds dsDNA; the sequence is AYKKLSHQML…AYQSLDFIED (136 aa).

This sequence belongs to the DnaA family. Oligomerizes as a right-handed, spiral filament on DNA at oriC.

Its subcellular location is the cytoplasm. In terms of biological role, plays an essential role in the initiation and regulation of chromosomal replication. ATP-DnaA binds to the origin of replication (oriC) to initiate formation of the DNA replication initiation complex once per cell cycle. Binds the DnaA box (a 9 base pair repeat at the origin) and separates the double-stranded (ds)DNA. Forms a right-handed helical filament on oriC DNA; dsDNA binds to the exterior of the filament while single-stranded (ss)DNA is stabiized in the filament's interior. The ATP-DnaA-oriC complex binds and stabilizes one strand of the AT-rich DNA unwinding element (DUE), permitting loading of DNA polymerase. After initiation quickly degrades to an ADP-DnaA complex that is not apt for DNA replication. Binds acidic phospholipids. The chain is Chromosomal replication initiator protein DnaA 1 from Chlamydia trachomatis serovar D (strain ATCC VR-885 / DSM 19411 / UW-3/Cx).